A 62-amino-acid chain; its full sequence is Guanine nucleotide-binding protein subunit gamma (62 aa).

C59 is subject to Cysteine methyl ester. The S-geranylgeranyl cysteine moiety is linked to residue C59. The propeptide at 60 to 62 is removed in mature form; that stretch reads SVL.

The protein belongs to the G protein gamma family. As to quaternary structure, g proteins are composed of 3 units, alpha, beta and gamma. Interacts with gpb-1 and gpb-2.

Its subcellular location is the cell membrane. Its function is as follows. Guanine nucleotide-binding proteins (G proteins) are involved as a modulator or transducer in various transmembrane signaling systems. The beta and gamma chains are required for the GTPase activity, for replacement of GDP by GTP, and for G protein-effector interaction. This is Guanine nucleotide-binding protein subunit gamma (gpc-1) from Caenorhabditis briggsae.